Consider the following 45-residue polypeptide: Somatoliberin (45 aa).

This sequence belongs to the glucagon family.

Its subcellular location is the secreted. GRF is released by the hypothalamus and acts on the adenohypophyse to stimulate the secretion of growth hormone. The sequence is that of Somatoliberin (ghrh) from Cyprinus carpio (Common carp).